The primary structure comprises 697 residues: Elongation factor G (697 aa).

The region spanning 8–290 (ERYRNFGIMA…AVVDYLPSPL (283 aa)) is the tr-type G domain. Residues 17–24 (AHIDAGKT), 88–92 (DTPGH), and 142–145 (NKLD) each bind GTP.

Belongs to the TRAFAC class translation factor GTPase superfamily. Classic translation factor GTPase family. EF-G/EF-2 subfamily.

It localises to the cytoplasm. Functionally, catalyzes the GTP-dependent ribosomal translocation step during translation elongation. During this step, the ribosome changes from the pre-translocational (PRE) to the post-translocational (POST) state as the newly formed A-site-bound peptidyl-tRNA and P-site-bound deacylated tRNA move to the P and E sites, respectively. Catalyzes the coordinated movement of the two tRNA molecules, the mRNA and conformational changes in the ribosome. In Sphingopyxis alaskensis (strain DSM 13593 / LMG 18877 / RB2256) (Sphingomonas alaskensis), this protein is Elongation factor G.